A 285-amino-acid polypeptide reads, in one-letter code: MKLCGFDVGIDQPFFLIAGTCSIEGLQMSLDVAGLLKEACAGLGIPLIYKGSFDKANRSSGTTNRGLGLEAGLKILDEVRRQTGLPVLTDVHDESQVAEVASVVDVLQTPAFLCRQTDFIRAVAMSGKPVNIKKGQFLAPWDMKNVIDKARAAARDAGLSEDRFLACERGVSFGYNNLVADMTSLAEMRNTGAPVVFDVTHSVQKPGGLGGSSGGAREMVPVLARAGVAVGVAGLFMETHPDPAKAFSDGPNAVPLKHMKTLLEQLVALDRVVKTRPLLENDFSC.

It belongs to the KdsA family.

Its subcellular location is the cytoplasm. It catalyses the reaction D-arabinose 5-phosphate + phosphoenolpyruvate + H2O = 3-deoxy-alpha-D-manno-2-octulosonate-8-phosphate + phosphate. It functions in the pathway carbohydrate biosynthesis; 3-deoxy-D-manno-octulosonate biosynthesis; 3-deoxy-D-manno-octulosonate from D-ribulose 5-phosphate: step 2/3. The protein operates within bacterial outer membrane biogenesis; lipopolysaccharide biosynthesis. This Leptothrix cholodnii (strain ATCC 51168 / LMG 8142 / SP-6) (Leptothrix discophora (strain SP-6)) protein is 2-dehydro-3-deoxyphosphooctonate aldolase.